A 472-amino-acid chain; its full sequence is Glutamate--tRNA ligase (472 aa).

Positions 9–19 match the 'HIGH' region motif; the sequence is PSPTGYLHVGG. Zn(2+) is bound by residues cysteine 98, cysteine 100, cysteine 125, and histidine 127. The short motif at 237 to 241 is the 'KMSKS' region element; the sequence is KLSKR. Lysine 240 contacts ATP.

This sequence belongs to the class-I aminoacyl-tRNA synthetase family. Glutamate--tRNA ligase type 1 subfamily. In terms of assembly, monomer. Requires Zn(2+) as cofactor.

It localises to the cytoplasm. The enzyme catalyses tRNA(Glu) + L-glutamate + ATP = L-glutamyl-tRNA(Glu) + AMP + diphosphate. Functionally, catalyzes the attachment of glutamate to tRNA(Glu) in a two-step reaction: glutamate is first activated by ATP to form Glu-AMP and then transferred to the acceptor end of tRNA(Glu). The chain is Glutamate--tRNA ligase from Klebsiella pneumoniae (strain 342).